The sequence spans 118 residues: MSNMKTLSQRRAMRNRAKLAKASVVRPRLSVFRSSKHIYAQVIDDTRGVTVAAASSLDEKFGKKAGTDVAAAGEVGKLLAQRAKDAGITDVVFDRGGYIYHGRVKALAEGAREGGLNF.

The protein belongs to the universal ribosomal protein uL18 family. In terms of assembly, part of the 50S ribosomal subunit; part of the 5S rRNA/L5/L18/L25 subcomplex. Contacts the 5S and 23S rRNAs.

Its function is as follows. This is one of the proteins that bind and probably mediate the attachment of the 5S RNA into the large ribosomal subunit, where it forms part of the central protuberance. This is Large ribosomal subunit protein uL18 from Parvibaculum lavamentivorans (strain DS-1 / DSM 13023 / NCIMB 13966).